A 1964-amino-acid chain; its full sequence is Probable helicase with zinc finger domain (1964 aa).

The segment at 178–206 adopts a C3H1-type zinc-finger fold; sequence SEEYTLCKRFLEQGICRYGAQCTSAHSQE. Ser248 bears the Phosphoserine mark. ATP is bound at residue 668–675; it reads GPYGTGKT. The short motif at 794–797 is the DEAA box element; that stretch reads DEAA. A compositionally biased stretch (polar residues) spans 1116–1127; that stretch reads HSGNSSRQQQSP. Residues 1116–1135 form a disordered region; it reads HSGNSSRQQQSPPKVKSLYH. Thr1163 is modified (phosphothreonine). At Arg1245 the chain carries Omega-N-methylarginine. Disordered stretches follow at residues 1248–1350, 1360–1379, 1388–1449, 1463–1491, 1631–1655, and 1743–1964; these read PIPY…LPAP, HFHP…QPHT, LPEQ…QAGP, QSPA…RAIT, QVQP…QFAN, and QHAA…SYFK. 2 stretches are compositionally biased toward basic and acidic residues: residues 1268-1281 and 1292-1308; these read HAEK…RNGK and NKIR…KQVD. The span at 1365-1374 shows a compositional bias: pro residues; that stretch reads PQLPRPPFPA. Over residues 1388–1431 the composition is skewed to low complexity; sequence LPEQPNQMAPQPNQVAPQPNQMTPQPNQVAPQPNQVVQQQSQAP. A compositionally biased stretch (pro residues) spans 1635-1644; it reads RSPPAVPSPP. Residues Ser1636, Ser1760, Ser1763, and Ser1788 each carry the phosphoserine modification. Polar residues predominate over residues 1755–1765; sequence SSRTVSASSLP. 2 stretches are compositionally biased toward polar residues: residues 1799 to 1813 and 1826 to 1849; these read PQDS…QGHS and WANT…TSQP. Residues 1860 to 1870 are compositionally biased toward basic and acidic residues; the sequence is KPPEDQLKPES. Polar residues-rich tracts occupy residues 1872–1881 and 1897–1910; these read EVSSSFNYSM and IAES…QSPA. Low complexity predominate over residues 1941–1956; it reads PLSLLQELSLGSSPGS.

It belongs to the DNA2/NAM7 helicase family. As to quaternary structure, interacts with POLR2A. Interacts with SMYD3; the interaction may bridge SMYD3 and RNA polymerase II. Interacts with SMYD2.

The protein localises to the nucleus. May act as a helicase that plays a role in RNA metabolism in multiple tissues and organs within the developing embryo. The protein is Probable helicase with zinc finger domain (Helz) of Mus musculus (Mouse).